The primary structure comprises 168 residues: Pleiotrophin (168 aa).

Positions 1–32 (MSSQQYQQQRRKFAAAFLALIFILAAVDTAEA) are cleaved as a signal peptide. Intrachain disulfides connect Cys-47–Cys-76, Cys-55–Cys-85, Cys-62–Cys-89, Cys-99–Cys-131, and Cys-109–Cys-141. 2 chondroitin sulfate binding regions span residues 92-99 (KKQFGAEC) and 123-131 (KRALHNADC). Residues 139–168 (KPCGKLTKPKPQAESKKKKKEGKKQEKMLD) form a disordered region. The tract at residues 147 to 168 (PKPQAESKKKKKEGKKQEKMLD) is chondroitin sulfate A binding.

The protein belongs to the pleiotrophin family. As to quaternary structure, interacts with ALK and NEK6. Interacts with PTPRZ1 (via chondroitin sulfate groups); promotes formation of homooligomers; oligomerization impairs tyrosine phosphatase activity. Forms a complex with PTPRZ1 and CTNNB1; this complex inactivates PTPRZ1 protein tyrosine phosphatase activity through PTN interaction and stimulates tyrosine phosphorylation of CTNNB1. Interacts with ITGB3 and ITGA5. Forms a complex with PTPRZ1 and integrin alpha-V/beta-3 (ITGAV:ITGB3) that stimulates endothelial cell migration through ITGB3 'Tyr-773' phosphorylation. Interacts with SDC3 (via heparan sulfate chains); this interaction mediates the neurite outgrowth-promoting signal from PTN to the cytoskeleton of growing neurites; this interaction mediates osteoblast recruitment. Interacts with GPC2 (via heparan sulfate); this interaction promotes neurite outgrowth through binding of PTN with chondroitin sulfate of proteoglycans, thereby releasing PTPRS of chondroitin sulfate proteoglycans (CSPGs) and leading to binding with heparan sulfate of GPC2. Post-translationally, phosphorylated by NEK6. In terms of tissue distribution, osteoblast and brain. Expressed in the follicular epithelium and granulosa cells of the ovary. Strongly expressed in the uterus of newborn mice, and the degree of expression decreased in one-week-old mice, although the expression continues even in the uteri of adult mice. Expression gradually increases from proestrus to estrus, then decreases sharply, and thereafter gradually increased again. strongly expressed in the cochlea of WT mice 1 week after birth, and then the expression decreased and was undetectable by week 8 after birth. Expressed around the cell soma of osteocytes and apparently captured in the unmineralized interstitial matrix surrounding the cells. Furthermore distributed throughout the intraosseous canalicular porosity, being localized in the unmineralized matrix around the cell processes. Strongly expressed in the innermost layer of the periosteum.

It localises to the secreted. Its function is as follows. Secreted growth factor that mediates its signal through cell-surface proteoglycan and non-proteoglycan receptors. Binds cell-surface proteoglycan receptor via their chondroitin sulfate (CS) groups. Thereby regulates many processes like cell proliferation, cell survival, cell growth, cell differentiation and cell migration in several tissues namely neuron and bone. Also plays a role in synaptic plasticity and learning-related behavior by inhibiting long-term synaptic potentiation. Binds PTPRZ1, leading to neutralization of the negative charges of the CS chains of PTPRZ1, inducing PTPRZ1 clustering, thereby causing the dimerization and inactivation of its phosphatase activity leading to increased tyrosine phosphorylation of each of the PTPRZ1 substrates like ALK or AFAP1L2 in order to activate the PI3K-AKT pathway. Through PTPRZ1 binding controls oligodendrocyte precursor cell differentiation by enhancing the phosphorylation of AFAP1L2 in order to activate the PI3K-AKT pathway. Forms a complex with PTPRZ1 and integrin alpha-V/beta-3 (ITGAV:ITGB3) that stimulates endothelial cell migration through SRC dephosphorylation and activation that consequently leads to ITGB3 'Tyr-773' phosphorylation. In adult hippocampus promotes dendritic arborization, spine development, and functional integration and connectivity of newborn granule neurons through ALK by activating AKT signaling pathway. Binds GPC2 and chondroitin sulfate proteoglycans (CSPGs) at the neuron surface, leading to abrogation of binding between PTPRS and CSPGs and neurite outgrowth promotion. Binds SDC3 and mediates bone formation by recruiting and attaching osteoblasts/osteoblast precursors to the sites for new bone deposition. Binds ALK and promotes cell survival and cell proliferation through MAPK pathway activation. Inhibits proliferation and enhances differentiation of neural stem cells by inhibiting FGF2-induced fibroblast growth factor receptor signaling pathway. Mediates regulatory mechanisms in normal hemostasis and in hematopoietic regeneration and in maintaining the balance of myeloid and lymphoid regeneration. In addition may play a role in the female reproductive system, auditory response and the progesterone-induced decidualization pathway. This Mus musculus (Mouse) protein is Pleiotrophin.